A 157-amino-acid chain; its full sequence is Transcription elongation factor GreA (157 aa).

Residues 47–75 (SGEYEDAKKAQALLEGRIRELKHLLSRAE) are a coiled coil.

Belongs to the GreA/GreB family.

Its function is as follows. Necessary for efficient RNA polymerase transcription elongation past template-encoded arresting sites. The arresting sites in DNA have the property of trapping a certain fraction of elongating RNA polymerases that pass through, resulting in locked ternary complexes. Cleavage of the nascent transcript by cleavage factors such as GreA or GreB allows the resumption of elongation from the new 3'terminus. GreA releases sequences of 2 to 3 nucleotides. This Chloroflexus aurantiacus (strain ATCC 29366 / DSM 635 / J-10-fl) protein is Transcription elongation factor GreA.